The following is a 212-amino-acid chain: Imidazole glycerol phosphate synthase subunit HisH (212 aa).

The region spanning 1–212 (MLAILDYKAG…YAYCKEASRA (212 aa)) is the Glutamine amidotransferase type-1 domain. Cys-79 acts as the Nucleophile in catalysis. Residues His-187 and Glu-189 contribute to the active site.

In terms of assembly, heterodimer of HisH and HisF.

It localises to the cytoplasm. The enzyme catalyses 5-[(5-phospho-1-deoxy-D-ribulos-1-ylimino)methylamino]-1-(5-phospho-beta-D-ribosyl)imidazole-4-carboxamide + L-glutamine = D-erythro-1-(imidazol-4-yl)glycerol 3-phosphate + 5-amino-1-(5-phospho-beta-D-ribosyl)imidazole-4-carboxamide + L-glutamate + H(+). It carries out the reaction L-glutamine + H2O = L-glutamate + NH4(+). The protein operates within amino-acid biosynthesis; L-histidine biosynthesis; L-histidine from 5-phospho-alpha-D-ribose 1-diphosphate: step 5/9. Its function is as follows. IGPS catalyzes the conversion of PRFAR and glutamine to IGP, AICAR and glutamate. The HisH subunit catalyzes the hydrolysis of glutamine to glutamate and ammonia as part of the synthesis of IGP and AICAR. The resulting ammonia molecule is channeled to the active site of HisF. The polypeptide is Imidazole glycerol phosphate synthase subunit HisH (Nitratidesulfovibrio vulgaris (strain DSM 19637 / Miyazaki F) (Desulfovibrio vulgaris)).